The primary structure comprises 475 residues: Aspartyl/glutamyl-tRNA(Asn/Gln) amidotransferase subunit B (475 aa).

The protein belongs to the GatB/GatE family. GatB subfamily. In terms of assembly, heterotrimer of A, B and C subunits.

The enzyme catalyses L-glutamyl-tRNA(Gln) + L-glutamine + ATP + H2O = L-glutaminyl-tRNA(Gln) + L-glutamate + ADP + phosphate + H(+). It carries out the reaction L-aspartyl-tRNA(Asn) + L-glutamine + ATP + H2O = L-asparaginyl-tRNA(Asn) + L-glutamate + ADP + phosphate + 2 H(+). In terms of biological role, allows the formation of correctly charged Asn-tRNA(Asn) or Gln-tRNA(Gln) through the transamidation of misacylated Asp-tRNA(Asn) or Glu-tRNA(Gln) in organisms which lack either or both of asparaginyl-tRNA or glutaminyl-tRNA synthetases. The reaction takes place in the presence of glutamine and ATP through an activated phospho-Asp-tRNA(Asn) or phospho-Glu-tRNA(Gln). This Agathobacter rectalis (strain ATCC 33656 / DSM 3377 / JCM 17463 / KCTC 5835 / VPI 0990) (Eubacterium rectale) protein is Aspartyl/glutamyl-tRNA(Asn/Gln) amidotransferase subunit B.